The following is a 361-amino-acid chain: Ribosomal RNA large subunit methyltransferase M (361 aa).

S-adenosyl-L-methionine is bound by residues S187, 220–223 (CPGG), D239, D259, and D276. Catalysis depends on K305, which acts as the Proton acceptor.

This sequence belongs to the class I-like SAM-binding methyltransferase superfamily. RNA methyltransferase RlmE family. RlmM subfamily. Monomer.

It localises to the cytoplasm. The catalysed reaction is cytidine(2498) in 23S rRNA + S-adenosyl-L-methionine = 2'-O-methylcytidine(2498) in 23S rRNA + S-adenosyl-L-homocysteine + H(+). Its function is as follows. Catalyzes the 2'-O-methylation at nucleotide C2498 in 23S rRNA. In Shewanella baltica (strain OS185), this protein is Ribosomal RNA large subunit methyltransferase M.